Here is a 561-residue protein sequence, read N- to C-terminus: Dihydroxy-acid dehydratase (561 aa).

Cys-50 is a binding site for [2Fe-2S] cluster. A Mg(2+)-binding site is contributed by Asp-82. Position 123 (Cys-123) interacts with [2Fe-2S] cluster. Asp-124 and Lys-125 together coordinate Mg(2+). Lys-125 carries the post-translational modification N6-carboxylysine. Residue Cys-195 participates in [2Fe-2S] cluster binding. A Mg(2+)-binding site is contributed by Glu-447. The active-site Proton acceptor is Ser-473.

It belongs to the IlvD/Edd family. Homodimer. The cofactor is [2Fe-2S] cluster. Mg(2+) is required as a cofactor.

The enzyme catalyses (2R)-2,3-dihydroxy-3-methylbutanoate = 3-methyl-2-oxobutanoate + H2O. It catalyses the reaction (2R,3R)-2,3-dihydroxy-3-methylpentanoate = (S)-3-methyl-2-oxopentanoate + H2O. The protein operates within amino-acid biosynthesis; L-isoleucine biosynthesis; L-isoleucine from 2-oxobutanoate: step 3/4. Its pathway is amino-acid biosynthesis; L-valine biosynthesis; L-valine from pyruvate: step 3/4. In terms of biological role, functions in the biosynthesis of branched-chain amino acids. Catalyzes the dehydration of (2R,3R)-2,3-dihydroxy-3-methylpentanoate (2,3-dihydroxy-3-methylvalerate) into 2-oxo-3-methylpentanoate (2-oxo-3-methylvalerate) and of (2R)-2,3-dihydroxy-3-methylbutanoate (2,3-dihydroxyisovalerate) into 2-oxo-3-methylbutanoate (2-oxoisovalerate), the penultimate precursor to L-isoleucine and L-valine, respectively. The polypeptide is Dihydroxy-acid dehydratase (Rippkaea orientalis (strain PCC 8801 / RF-1) (Cyanothece sp. (strain PCC 8801))).